A 373-amino-acid chain; its full sequence is Leucine aminopeptidase 1 (373 aa).

The first 18 residues, 1 to 18 (MKLLSVLALSATATSVLG), serve as a signal peptide directing secretion. Asn136 carries an N-linked (GlcNAc...) asparagine glycan. Residues His176 and Asp195 each coordinate Zn(2+). N-linked (GlcNAc...) asparagine glycosylation is present at Asn196. Residues Glu234 and Asp261 each coordinate Zn(2+). Asn284 carries N-linked (GlcNAc...) asparagine glycosylation. Cys310 and Cys314 are disulfide-bonded. Residue His343 coordinates Zn(2+).

The protein belongs to the peptidase M28 family. M28E subfamily. Monomer. Requires Zn(2+) as cofactor.

The protein localises to the secreted. Functionally, extracellular aminopeptidase which contributes to pathogenicity. This is Leucine aminopeptidase 1 (LAP1) from Trichophyton equinum (Horse ringworm fungus).